The sequence spans 381 residues: UDP-N-acetylglucosamine--N-acetylmuramyl-(pentapeptide) pyrophosphoryl-undecaprenol N-acetylglucosamine transferase (381 aa).

Residues 10–12 (TGG), Asn-124, Arg-165, Ser-190, Ile-245, and Gln-290 each bind UDP-N-acetyl-alpha-D-glucosamine. The interval 361-381 (WGSPAGQERPGHGPVRPPDLA) is disordered.

The protein belongs to the glycosyltransferase 28 family. MurG subfamily.

It localises to the cell inner membrane. The catalysed reaction is di-trans,octa-cis-undecaprenyl diphospho-N-acetyl-alpha-D-muramoyl-L-alanyl-D-glutamyl-meso-2,6-diaminopimeloyl-D-alanyl-D-alanine + UDP-N-acetyl-alpha-D-glucosamine = di-trans,octa-cis-undecaprenyl diphospho-[N-acetyl-alpha-D-glucosaminyl-(1-&gt;4)]-N-acetyl-alpha-D-muramoyl-L-alanyl-D-glutamyl-meso-2,6-diaminopimeloyl-D-alanyl-D-alanine + UDP + H(+). It functions in the pathway cell wall biogenesis; peptidoglycan biosynthesis. Cell wall formation. Catalyzes the transfer of a GlcNAc subunit on undecaprenyl-pyrophosphoryl-MurNAc-pentapeptide (lipid intermediate I) to form undecaprenyl-pyrophosphoryl-MurNAc-(pentapeptide)GlcNAc (lipid intermediate II). The polypeptide is UDP-N-acetylglucosamine--N-acetylmuramyl-(pentapeptide) pyrophosphoryl-undecaprenol N-acetylglucosamine transferase (Anaeromyxobacter sp. (strain Fw109-5)).